Consider the following 74-residue polypeptide: ATP synthase subunit c (74 aa).

The next 2 membrane-spanning stretches (helical) occupy residues 5 to 25 and 49 to 69; these read LAYI…LGVG and LFIG…VALL.

This sequence belongs to the ATPase C chain family. As to quaternary structure, F-type ATPases have 2 components, F(1) - the catalytic core - and F(0) - the membrane proton channel. F(1) has five subunits: alpha(3), beta(3), gamma(1), delta(1), epsilon(1). F(0) has three main subunits: a(1), b(2) and c(10-14). The alpha and beta chains form an alternating ring which encloses part of the gamma chain. F(1) is attached to F(0) by a central stalk formed by the gamma and epsilon chains, while a peripheral stalk is formed by the delta and b chains.

The protein resides in the cell inner membrane. Its function is as follows. F(1)F(0) ATP synthase produces ATP from ADP in the presence of a proton or sodium gradient. F-type ATPases consist of two structural domains, F(1) containing the extramembraneous catalytic core and F(0) containing the membrane proton channel, linked together by a central stalk and a peripheral stalk. During catalysis, ATP synthesis in the catalytic domain of F(1) is coupled via a rotary mechanism of the central stalk subunits to proton translocation. In terms of biological role, key component of the F(0) channel; it plays a direct role in translocation across the membrane. A homomeric c-ring of between 10-14 subunits forms the central stalk rotor element with the F(1) delta and epsilon subunits. This Ruegeria sp. (strain TM1040) (Silicibacter sp.) protein is ATP synthase subunit c.